The sequence spans 456 residues: RNA polymerase II-associated protein 1 homolog (456 aa).

The interval 382-456 is disordered; it reads LRSVEGSLNE…PVEQLQNEED (75 aa). Residue Ser388 is modified to Phosphoserine. Residues 396 to 406 show a composition bias toward basic and acidic residues; that stretch reads EEKPAESREQL. Polar residues-rich tracts occupy residues 408 to 433 and 441 to 456; these read SAEQTNGVKPETQAQNMSASESQANS and GNTQPSPVEQLQNEED.

It belongs to the PAF1 family.

Its subcellular location is the cytoplasm. It localises to the nucleus. The protein is RNA polymerase II-associated protein 1 homolog of Schizosaccharomyces pombe (strain 972 / ATCC 24843) (Fission yeast).